Here is a 40-residue protein sequence, read N- to C-terminus: Esterase-4 (40 aa).

The protein belongs to the type-B carboxylesterase/lipase family.

The enzyme catalyses a carboxylic ester + H2O = an alcohol + a carboxylate + H(+). The protein is Esterase-4 (Est-4) of Drosophila mojavensis (Fruit fly).